Reading from the N-terminus, the 784-residue chain is DNA repair and recombination protein RAD54-like (784 aa).

Residues 1–54 (MRRSLAPSQRGPMRPESRHSFTPPLLKKNKRSCQQELEREQELDRKRQSALRDA) form a disordered region. Residues 2–9 (RRSLAPSQ) are required for chromatin remodeling, strand pairing activities and coupling of ATPase activity. The residue at position 20 (Ser20) is a Phosphoserine. Thr22 carries the phosphothreonine modification. The segment covering 36–47 (ELEREQELDRKR) has biased composition (basic and acidic residues). The region spanning 172-346 (EGKRGNFNGC…YSLVNFVNPE (175 aa)) is the Helicase ATP-binding domain. 185–192 (DEMGLGKT) provides a ligand contact to ATP. The DEGH box signature appears at 297-300 (DEGH). Positions 503–660 (LLDFMLAAIR…NNESAEKHFT (158 aa)) constitute a Helicase C-terminal domain. The disordered stretch occupies residues 751–784 (EEAASEQPEEKPDRRKRPSTPPSDDSADEDFLGF). Residues 775 to 784 (DSADEDFLGF) show a composition bias toward acidic residues.

The protein belongs to the SNF2/RAD54 helicase family. As to quaternary structure, interacts (via N-terminus) with spn-A/Rad51.

The protein resides in the nucleus. Functionally, involved in mitotic DNA repair and meiotic recombination. Functions in the recombinational DNA repair pathway. Essential for interhomolog gene conversion (GC), but may have a less important role in intersister GC than spn-A/Rad51. In the presence of DNA, spn-A/Rad51 enhances the ATPase activity of okr/Rad54. The chain is DNA repair and recombination protein RAD54-like from Drosophila yakuba (Fruit fly).